Reading from the N-terminus, the 471-residue chain is PE-PGRS family protein PE_PGRS33 (471 aa).

The segment at methionine 1–alanine 30 is essential for translocation to the cell surface. Positions methionine 1 to alanine 93 constitute a PE domain. Residues glycine 140–glycine 230 are interacts with TLR2.

It belongs to the mycobacterial PE family. PGRS subfamily. As to quaternary structure, interacts with human TLR2.

The protein localises to the secreted. Its subcellular location is the cell wall. It is found in the cell surface. The protein resides in the cell outer membrane. Functionally, induces TNF-alpha release through human Toll-like receptor 2 (TLR2) signaling pathway, leading to macrophage apoptosis. This is PE-PGRS family protein PE_PGRS33 (PE_PGRS33) from Mycobacterium tuberculosis (strain CDC 1551 / Oshkosh).